We begin with the raw amino-acid sequence, 260 residues long: Alpha-acetolactate decarboxylase (260 aa).

The protein belongs to the alpha-acetolactate decarboxylase family.

The enzyme catalyses (2S)-2-acetolactate + H(+) = (R)-acetoin + CO2. Its pathway is polyol metabolism; (R,R)-butane-2,3-diol biosynthesis; (R,R)-butane-2,3-diol from pyruvate: step 2/3. Converts acetolactate into acetoin. This chain is Alpha-acetolactate decarboxylase (budA), found in Methylococcus capsulatus (strain ATCC 33009 / NCIMB 11132 / Bath).